The sequence spans 60 residues: MDRGLTVFVAVHVPDVLLNGWRWRLGAIPPLVCLLAISVVPPSGQRGPVAFRTRVATGAH.

This chain is Protein K12 (K12), found in Human herpesvirus 8 type P (isolate GK18) (HHV-8).